We begin with the raw amino-acid sequence, 301 residues long: Ribonuclease HIII (301 aa).

One can recognise an RNase H type-2 domain in the interval 88–301 (WSVLGSDEVG…TQKARQLARQ (214 aa)). D94, E95, and D197 together coordinate a divalent metal cation.

This sequence belongs to the RNase HII family. RnhC subfamily. It depends on Mn(2+) as a cofactor. The cofactor is Mg(2+).

It localises to the cytoplasm. It catalyses the reaction Endonucleolytic cleavage to 5'-phosphomonoester.. Endonuclease that specifically degrades the RNA of RNA-DNA hybrids. This chain is Ribonuclease HIII, found in Limosilactobacillus fermentum (strain NBRC 3956 / LMG 18251) (Lactobacillus fermentum).